Consider the following 1253-residue polypeptide: Pleckstrin homology-like domain family B member 2 (1253 aa).

Residues 1-12 (MEEHSYIQKELD) show a composition bias toward basic and acidic residues. Disordered regions lie at residues 1-43 (MEEH…PKKY), 60-159 (LTLS…KSHD), and 187-212 (DAGP…RKMS). The span at 29–43 (NDSQNMMESLSPKKY) shows a compositional bias: polar residues. Phosphoserine is present on residues Ser-71 and Ser-73. A compositionally biased stretch (polar residues) spans 74 to 96 (PLGTSVRSSPSLAKIQGSKQFSY). Over residues 126-144 (ADFDHYTGRDSERALRLSE) the composition is skewed to basic and acidic residues. Residues Ser-157, Ser-204, Ser-212, Ser-242, and Ser-245 each carry the phosphoserine modification. Positions 265–286 (NQLTPLSLPPRNSLGNSKRTKL) are disordered. Ser-330, Ser-334, Ser-348, Ser-351, Ser-384, Ser-387, Ser-415, Ser-420, Ser-468, Ser-489, and Ser-501 each carry phosphoserine. At Thr-504 the chain carries Phosphothreonine. Ser-513 carries the post-translational modification Phosphoserine. A disordered region spans residues 525-567 (LSQSSASFFTPRSTRNDELLSDLTRTPPPPSSTFPKASSESSY). Thr-550 and Thr-574 each carry phosphothreonine. 2 coiled-coil regions span residues 584–696 (SQEL…LDNC) and 722–807 (FEDL…LCNL). Thr-898 is subject to Phosphothreonine. Positions 1032–1098 (IARIEEMERL…QKLIEKEVKI (67 aa)) form a coiled coil. The 104-residue stretch at 1143–1246 (EKTCRGFLIK…WMDVIVTGAE (104 aa)) folds into the PH domain.

As to quaternary structure, interacts with FLNC. Interacts with AMOTL2; interaction may facilitate PHLDB2 localization to the myotube podosome cortex that surrounds the core. Part of a cortical microtubule stabilization complex (CMSC) composed of KANK1, PPFIA1, PPFIBP1, ERC1/ELKS, PHLDB2/LL5beta, CLASPs, KIF21A and possibly additional interactors; within CMSCs KANK1 and PHLDB2/LL5beta appear to be the core components for targeting of microtubule-binding proteins KIF21A and CLASPs, whereas PPFIA1, PPFIBP1 and ERC1/ELKS serve as scaffolds for protein clustering.

It is found in the cytoplasm. The protein resides in the cell cortex. The protein localises to the membrane. Its subcellular location is the cell projection. It localises to the podosome. In terms of biological role, seems to be involved in the assembly of the postsynaptic apparatus. May play a role in acetyl-choline receptor (AChR) aggregation in the postsynaptic membrane. The chain is Pleckstrin homology-like domain family B member 2 (PHLDB2) from Homo sapiens (Human).